Reading from the N-terminus, the 305-residue chain is tRNA dimethylallyltransferase (305 aa).

ATP is bound at residue Gly-8–Ser-15. Thr-10–Ser-15 provides a ligand contact to substrate. The segment at Asp-33 to Ala-36 is interaction with substrate tRNA.

Belongs to the IPP transferase family. As to quaternary structure, monomer. Mg(2+) is required as a cofactor.

It catalyses the reaction adenosine(37) in tRNA + dimethylallyl diphosphate = N(6)-dimethylallyladenosine(37) in tRNA + diphosphate. In terms of biological role, catalyzes the transfer of a dimethylallyl group onto the adenine at position 37 in tRNAs that read codons beginning with uridine, leading to the formation of N6-(dimethylallyl)adenosine (i(6)A). The sequence is that of tRNA dimethylallyltransferase from Aquifex aeolicus (strain VF5).